Reading from the N-terminus, the 868-residue chain is Translation initiation factor IF-2 (868 aa).

Composition is skewed to basic and acidic residues over residues 156–166 (ETVKEEEKINS) and 199–209 (SKKEEVKPEKV). 2 disordered regions span residues 156–177 (ETVKEEEKINSEENTAESQDEL) and 199–269 (SKKE…KYRE). The segment covering 249–260 (RGGRSKFKKKKG) has biased composition (basic residues). A tr-type G domain is found at 368–537 (GRAPVVTIMG…LLQSEVLELK (170 aa)). The interval 377–384 (GHVDHGKT) is G1. Residue 377 to 384 (GHVDHGKT) coordinates GTP. Residues 402-406 (GITQH) form a G2 region. Positions 423 to 426 (DTPG) are G3. Residues 423–427 (DTPGH) and 477–480 (NKMD) each bind GTP. The segment at 477 to 480 (NKMD) is G4. A G5 region spans residues 513–515 (SAK).

Belongs to the TRAFAC class translation factor GTPase superfamily. Classic translation factor GTPase family. IF-2 subfamily.

The protein resides in the cytoplasm. In terms of biological role, one of the essential components for the initiation of protein synthesis. Protects formylmethionyl-tRNA from spontaneous hydrolysis and promotes its binding to the 30S ribosomal subunits. Also involved in the hydrolysis of GTP during the formation of the 70S ribosomal complex. This chain is Translation initiation factor IF-2, found in Legionella pneumophila subsp. pneumophila (strain Philadelphia 1 / ATCC 33152 / DSM 7513).